We begin with the raw amino-acid sequence, 252 residues long: Isoprenyl transferase (252 aa).

Residue Asp28 is part of the active site. Residue Asp28 coordinates Mg(2+). Substrate is bound by residues 29–32, Trp33, Arg41, His45, and 73–75; these read GNGR and STE. Asn76 acts as the Proton acceptor in catalysis. Residues Trp77, Arg79, Arg200, and 206–208 contribute to the substrate site; that span reads RLS. Glu219 lines the Mg(2+) pocket.

The protein belongs to the UPP synthase family. In terms of assembly, homodimer. Mg(2+) serves as cofactor.

Its function is as follows. Catalyzes the condensation of isopentenyl diphosphate (IPP) with allylic pyrophosphates generating different type of terpenoids. This is Isoprenyl transferase from Streptococcus pneumoniae serotype 4 (strain ATCC BAA-334 / TIGR4).